Reading from the N-terminus, the 182-residue chain is Adenine phosphoribosyltransferase (182 aa).

It belongs to the purine/pyrimidine phosphoribosyltransferase family. Homodimer.

It localises to the cytoplasm. It catalyses the reaction AMP + diphosphate = 5-phospho-alpha-D-ribose 1-diphosphate + adenine. It functions in the pathway purine metabolism; AMP biosynthesis via salvage pathway; AMP from adenine: step 1/1. Functionally, catalyzes a salvage reaction resulting in the formation of AMP, that is energically less costly than de novo synthesis. The polypeptide is Adenine phosphoribosyltransferase (Pseudomonas fluorescens (strain Pf0-1)).